A 487-amino-acid chain; its full sequence is Sorting nexin-4 (487 aa).

A disordered region spans residues 1–59 (MDHDDFDSVSWRHGPDSDISRPTTSGTDTAESPETRRDPNGKRRMSSASEIPQAGPHAD). Polar residues predominate over residues 20 to 32 (SRPTTSGTDTAES). The 123-residue stretch at 70-192 (VLECRVDTPI…IFLESPDWNA (123 aa)) folds into the PX domain. Positions 113, 115, 139, and 158 each coordinate a 1,2-diacyl-sn-glycero-3-phospho-(1D-myo-inositol-3-phosphate). Residues 395 to 430 (EQSRRERMRKLELRIDELTREVESAKTTSEMFDEEV) adopt a coiled-coil conformation.

Belongs to the sorting nexin family.

The protein localises to the cytoplasm. It localises to the cytosol. It is found in the preautophagosomal structure membrane. Its subcellular location is the endosome membrane. Its function is as follows. Sorting nexin, involved in the separation or division of vacuoles throughout the entire life cycle of the cells. Involved in retrieval of late-Golgi SNAREs from post-Golgi endosomes to the trans-Golgi network, for cytoplasm to vacuole transport (Cvt), and autophagy of large cargos including mitophagy, pexophagy and glycophagy. The polypeptide is Sorting nexin-4 (snx4) (Emericella nidulans (strain FGSC A4 / ATCC 38163 / CBS 112.46 / NRRL 194 / M139) (Aspergillus nidulans)).